We begin with the raw amino-acid sequence, 407 residues long: Myeloid cell nuclear differentiation antigen (407 aa).

Residues 1–88 enclose the Pyrin domain; the sequence is MANEYKKILL…VNNLRKERSK (88 aa). Residues 122–211 are disordered; sequence LTSEVGERIP…TRRNVPQKDP (90 aa). Positions 131 to 137 match the Nuclear localization signal motif; it reads PVAQKRK. Positions 177–199 are enriched in low complexity; sequence HTSSSTPSNTSFAQNQQTQAQCQ. The HIN-200 domain maps to 196 to 394; the sequence is AQCQVDTRRN…CGSHSFIKVI (199 aa).

In terms of assembly, participates in a ternary complex with YY1 and the YY1 target DNA element. Binds nucleolin and nucleophosmin/NPM/B23.

The protein localises to the nucleus. The protein resides in the cytoplasm. Its function is as follows. May act as a transcriptional activator/repressor in the myeloid lineage. Plays a role in the granulocyte/monocyte cell-specific response to interferon. Stimulates the DNA binding of the transcriptional repressor protein YY1. The protein is Myeloid cell nuclear differentiation antigen (MNDA) of Macaca fascicularis (Crab-eating macaque).